Here is a 291-residue protein sequence, read N- to C-terminus: ATP synthase subunit a (291 aa).

Transmembrane regions (helical) follow at residues 48–68, 108–128, 161–181, 241–261, and 262–282; these read IHLD…LVFW, IAPL…MDLI, DPNI…FYSI, LIFI…SVPW, and AIFH…LTIV.

Belongs to the ATPase A chain family. As to quaternary structure, F-type ATPases have 2 components, CF(1) - the catalytic core - and CF(0) - the membrane proton channel. CF(1) has five subunits: alpha(3), beta(3), gamma(1), delta(1), epsilon(1). CF(0) has three main subunits: a(1), b(2) and c(9-12). The alpha and beta chains form an alternating ring which encloses part of the gamma chain. CF(1) is attached to CF(0) by a central stalk formed by the gamma and epsilon chains, while a peripheral stalk is formed by the delta and b chains.

Its subcellular location is the cell inner membrane. In terms of biological role, key component of the proton channel; it plays a direct role in the translocation of protons across the membrane. The chain is ATP synthase subunit a from Acinetobacter baylyi (strain ATCC 33305 / BD413 / ADP1).